The sequence spans 274 residues: Fatty-acid O-methyltransferase (274 aa).

The protein belongs to the methyltransferase superfamily.

The enzyme catalyses a fatty acid + S-adenosyl-L-methionine = a fatty acid methyl ester + S-adenosyl-L-homocysteine. Its function is as follows. O-methyltransferase that modifies the hydroxy group of the fatty acids. Oleate is the most effective fatty acid acceptor. This is Fatty-acid O-methyltransferase (mtf2) from Mycolicibacterium smegmatis (strain ATCC 700084 / mc(2)155) (Mycobacterium smegmatis).